A 395-amino-acid chain; its full sequence is F-box/kelch-repeat protein SKIP25 (395 aa).

The interval 1 to 29 is disordered; sequence MEKKLKRRESMSTTAAESPPAKRRRTVTG. Positions 34 to 79 constitute an F-box domain; the sequence is ALIEGLPDHISEICLSLVHRPSLLSAVCTRWRRLLYSPEFPSFPSL. Kelch repeat units lie at residues 81 to 129, 147 to 194, 196 to 245, 246 to 299, and 301 to 342; these read ALFV…YRHP, LILI…ACDG, IYIA…FSRE, AIDA…AMEE, and ILYS…TQVT.

In terms of assembly, part of a SCF (ASK-cullin-F-box) protein ligase complex. Interacts with SKP1A/ASK1.

It is found in the nucleus. The protein operates within protein modification; protein ubiquitination. In terms of biological role, component of SCF(ASK-cullin-F-box) E3 ubiquitin ligase complexes, which may mediate the ubiquitination and subsequent proteasomal degradation of target proteins. This chain is F-box/kelch-repeat protein SKIP25 (SKIP25), found in Arabidopsis thaliana (Mouse-ear cress).